Reading from the N-terminus, the 270-residue chain is tRNA pseudouridine synthase A (270 aa).

Asp60 functions as the Nucleophile in the catalytic mechanism. An RNA binding region spans residues 107 to 111 (FHARF). Tyr118 is a substrate binding site. An interaction with tRNA region spans residues 168 to 172 (QCQSR).

It belongs to the tRNA pseudouridine synthase TruA family. As to quaternary structure, homodimer.

The catalysed reaction is uridine(38/39/40) in tRNA = pseudouridine(38/39/40) in tRNA. Functionally, formation of pseudouridine at positions 38, 39 and 40 in the anticodon stem and loop of transfer RNAs. In Escherichia fergusonii (strain ATCC 35469 / DSM 13698 / CCUG 18766 / IAM 14443 / JCM 21226 / LMG 7866 / NBRC 102419 / NCTC 12128 / CDC 0568-73), this protein is tRNA pseudouridine synthase A.